Consider the following 407-residue polypeptide: Endo-1,4-beta-xylanase D (407 aa).

The N-terminal stretch at 1-19 (MTLVKSILLALAAGHVAQA) is a signal peptide. The 314-residue stretch at 20-333 (QLNTAAKAAG…KPAYYGILAG (314 aa)) folds into the GH10 domain. N-linked (GlcNAc...) asparagine glycosylation is present at asparagine 118. Glutamate 148 (proton donor) is an active-site residue. Glutamate 255 functions as the Nucleophile in the catalytic mechanism. Cysteine 283 and cysteine 289 form a disulfide bridge. The interval 337 to 364 (GSGSSSSTSSTTLITTTTPTASSSTTSA) is disordered. A CBM1 domain is found at 371-407 (SGAAHWGQCGGIGWSGPTICVSPYTCQVLNPYYSQCL).

Belongs to the glycosyl hydrolase 10 (cellulase F) family.

Its subcellular location is the secreted. The enzyme catalyses Endohydrolysis of (1-&gt;4)-beta-D-xylosidic linkages in xylans.. The protein operates within glycan degradation; xylan degradation. With respect to regulation, inhibited by wheat xylanase inhibiting protein I (XIP-I). In terms of biological role, endo-1,4-beta-xylanase involved in the hydrolysis of xylan, a major structural heterogeneous polysaccharide found in plant biomass representing the second most abundant polysaccharide in the biosphere, after cellulose. Shows an endo-mode of action on xylan forming mainly xylobiose and short-chain xylooligosaccharides (XOS). This is Endo-1,4-beta-xylanase D (xynD) from Talaromyces funiculosus (Fruitlet core rot fungus).